The chain runs to 147 residues: Hemoglobin subunit beta (147 aa).

The Globin domain maps to 3–147 (HWTAEEKQLI…VAHALARKYH (145 aa)). 2 residues coordinate heme b: histidine 64 and histidine 93.

Belongs to the globin family. As to quaternary structure, heterotetramer of two alpha chains and two beta chains. Red blood cells.

Involved in oxygen transport from the lung to the various peripheral tissues. This chain is Hemoglobin subunit beta (HBB), found in Cairina moschata (Muscovy duck).